The primary structure comprises 307 residues: MIRQRTLKSTVKATGVGLHGGRKVNLVLRPAAPDTGIVFHRVDLDPPLDLPADPYAVCDTRMCSGLEKGGQKVGTVEHLMSALAGLGIDNLHIDVDAPEIPILDGSSGPFVFLLQSAGIEEQKAPKRFLRVKKPVEYREGDKWVRLEPYDGFRLDFSIVFNHPAIDSTSTAVSIDFATHSYVRDVARARTFGFMQDVEFMRANGLALGGSLENAIVMDEYRVLNADGLRYADEFVKHKVLDAIGDLYLCGHPLLARYSAHKSGHALNNQILRVLLEDRSAWEIVSFEREAATPPAVAHQFAPVLAAA.

Positions 78, 237, and 241 each coordinate Zn(2+). The active-site Proton donor is the His-264.

This sequence belongs to the LpxC family. It depends on Zn(2+) as a cofactor.

The enzyme catalyses a UDP-3-O-[(3R)-3-hydroxyacyl]-N-acetyl-alpha-D-glucosamine + H2O = a UDP-3-O-[(3R)-3-hydroxyacyl]-alpha-D-glucosamine + acetate. It participates in glycolipid biosynthesis; lipid IV(A) biosynthesis; lipid IV(A) from (3R)-3-hydroxytetradecanoyl-[acyl-carrier-protein] and UDP-N-acetyl-alpha-D-glucosamine: step 2/6. In terms of biological role, catalyzes the hydrolysis of UDP-3-O-myristoyl-N-acetylglucosamine to form UDP-3-O-myristoylglucosamine and acetate, the committed step in lipid A biosynthesis. The sequence is that of UDP-3-O-acyl-N-acetylglucosamine deacetylase from Azoarcus sp. (strain BH72).